A 216-amino-acid polypeptide reads, in one-letter code: U1 small nuclear ribonucleoprotein C (216 aa).

The Matrin-type zinc finger occupies 4–36 (FFCDYCDVYLTHDSMSVRKAHNAGRNHLRNVVE). 3 stretches are compositionally biased toward pro residues: residues 68 to 80 (AMAP…PPFG), 87 to 198 (QLPP…PAPP), and 206 to 216 (PGPPPGLSEKR). The interval 68-216 (AMAPPGAFPP…GPPPGLSEKR (149 aa)) is disordered.

Belongs to the U1 small nuclear ribonucleoprotein C family. As to quaternary structure, U1 snRNP is composed of the 7 core Sm proteins B/B', D1, D2, D3, E, F and G that assemble in a heptameric protein ring on the Sm site of the small nuclear RNA to form the core snRNP, and at least 3 U1 snRNP-specific proteins U1-70K, U1-A and U1-C. U1-C interacts with U1 snRNA and the 5' splice-site region of the pre-mRNA.

Its subcellular location is the nucleus. Functionally, component of the spliceosomal U1 snRNP, which is essential for recognition of the pre-mRNA 5' splice-site and the subsequent assembly of the spliceosome. U1-C is directly involved in initial 5' splice-site recognition for both constitutive and regulated alternative splicing. The interaction with the 5' splice-site seems to precede base-pairing between the pre-mRNA and the U1 snRNA. Stimulates commitment or early (E) complex formation by stabilizing the base pairing of the 5' end of the U1 snRNA and the 5' splice-site region. This is U1 small nuclear ribonucleoprotein C from Aspergillus fumigatus (strain ATCC MYA-4609 / CBS 101355 / FGSC A1100 / Af293) (Neosartorya fumigata).